A 188-amino-acid polypeptide reads, in one-letter code: Adenine phosphoribosyltransferase (188 aa).

This sequence belongs to the purine/pyrimidine phosphoribosyltransferase family. Homodimer.

Its subcellular location is the cytoplasm. It catalyses the reaction AMP + diphosphate = 5-phospho-alpha-D-ribose 1-diphosphate + adenine. It functions in the pathway purine metabolism; AMP biosynthesis via salvage pathway; AMP from adenine: step 1/1. Its function is as follows. Catalyzes a salvage reaction resulting in the formation of AMP, that is energically less costly than de novo synthesis. The polypeptide is Adenine phosphoribosyltransferase (Burkholderia ambifaria (strain MC40-6)).